A 624-amino-acid chain; its full sequence is Na(+)/H(+) antiporter NhaA (624 aa).

The tract at residues 1-164 (MNPELPPNHL…TFFINGRRYD (164 aa)) is unknown. A na(+)/H(+) antiporter NhaA region spans residues 165–624 (GPWDVRSLSE…NAQAEEEKNP (460 aa)). 11 helical membrane passes run 199 to 219 (GIML…ALGP), 240 to 260 (LSLR…VVGL), 279 to 299 (LPIA…LILV), 319 to 339 (GWGV…AMMG), 348 to 368 (VFLT…VAIF), 371 to 391 (GELH…LALL), 407 to 427 (IVLW…GIIL), 497 to 517 (FLVL…TSVF), 521 to 541 (IPLM…GFIT), 565 to 585 (GAGA…SQAF), and 596 to 616 (IAIF…LWNA).

The protein belongs to the NhaA Na(+)/H(+) (TC 2.A.33) antiporter family.

The protein resides in the cell inner membrane. The catalysed reaction is Na(+)(in) + 2 H(+)(out) = Na(+)(out) + 2 H(+)(in). In terms of biological role, na(+)/H(+) antiporter that extrudes sodium in exchange for external protons. This Nitrosospira multiformis (strain ATCC 25196 / NCIMB 11849 / C 71) protein is Na(+)/H(+) antiporter NhaA.